Here is a 631-residue protein sequence, read N- to C-terminus: Glutamyl-tRNA(Gln) amidotransferase subunit E (631 aa).

The protein belongs to the GatB/GatE family. GatE subfamily. As to quaternary structure, heterodimer of GatD and GatE.

The catalysed reaction is L-glutamyl-tRNA(Gln) + L-glutamine + ATP + H2O = L-glutaminyl-tRNA(Gln) + L-glutamate + ADP + phosphate + H(+). Allows the formation of correctly charged Gln-tRNA(Gln) through the transamidation of misacylated Glu-tRNA(Gln) in organisms which lack glutaminyl-tRNA synthetase. The reaction takes place in the presence of glutamine and ATP through an activated gamma-phospho-Glu-tRNA(Gln). The GatDE system is specific for glutamate and does not act on aspartate. In Methanococcus maripaludis (strain DSM 14266 / JCM 13030 / NBRC 101832 / S2 / LL), this protein is Glutamyl-tRNA(Gln) amidotransferase subunit E.